The following is a 292-amino-acid chain: ABC transporter ATP-binding protein YtrB (292 aa).

The ABC transporter domain maps to 2–227 (IELRQLSKAI…YIKIQMAFDT (226 aa)). ATP is bound at residue 34 to 41 (GRNGSGKT).

Belongs to the ABC transporter superfamily. The complex is composed of 2 ATP-binding proteins (YtrB and YtrE), 2 transmembrane proteins (YtrC and YtrD) and a solute-binding protein (YtrF).

It localises to the cell membrane. In terms of biological role, part of the ABC transporter complex YtrBCDEF that plays a role in acetoin utilization during stationary phase and sporulation. In Bacillus subtilis (strain 168), this protein is ABC transporter ATP-binding protein YtrB (ytrB).